We begin with the raw amino-acid sequence, 82 residues long: MDSITTAASVVAAGLAVGLGAIGPGIGQGSAAQGAVEGIARQPEAEGKIRGTLLLSFAFMESLTIYGLVVALVLLFANPFAG.

Transmembrane regions (helical) follow at residues 7–27 and 57–77; these read AASVVAAGLAVGLGAIGPGIG and FAFMESLTIYGLVVALVLLFA.

It belongs to the ATPase C chain family. As to quaternary structure, F-type ATPases have 2 components, F(1) - the catalytic core - and F(0) - the membrane proton channel. F(1) has five subunits: alpha(3), beta(3), gamma(1), delta(1), epsilon(1). F(0) has four main subunits: a(1), b(1), b'(1) and c(10-14). The alpha and beta chains form an alternating ring which encloses part of the gamma chain. F(1) is attached to F(0) by a central stalk formed by the gamma and epsilon chains, while a peripheral stalk is formed by the delta, b and b' chains.

The protein resides in the cellular thylakoid membrane. In terms of biological role, f(1)F(0) ATP synthase produces ATP from ADP in the presence of a proton or sodium gradient. F-type ATPases consist of two structural domains, F(1) containing the extramembraneous catalytic core and F(0) containing the membrane proton channel, linked together by a central stalk and a peripheral stalk. During catalysis, ATP synthesis in the catalytic domain of F(1) is coupled via a rotary mechanism of the central stalk subunits to proton translocation. Its function is as follows. Key component of the F(0) channel; it plays a direct role in translocation across the membrane. A homomeric c-ring of between 10-14 subunits forms the central stalk rotor element with the F(1) delta and epsilon subunits. This is ATP synthase subunit c from Prochlorococcus marinus (strain NATL1A).